The sequence spans 572 residues: Cytochrome P450 monooxygenase xilC (572 aa).

Heme is bound at residue C515.

It belongs to the cytochrome P450 family. Requires heme as cofactor.

Its pathway is secondary metabolite biosynthesis. Functionally, cytochrome P450 monooxygenase; part of the gene cluster that mediates the biosynthesis of the 6-methyl-2-pyrone derivative xylariolide D. XilC hydroxylates the 5-alkyl-6-methyl-2-pyrone backbone called prexylariolide D, produced by the highly reducing polyketide synthase xilA, on its side chain to form xylariolide D. This is Cytochrome P450 monooxygenase xilC from Penicillium crustosum (Blue mold fungus).